Consider the following 635-residue polypeptide: Paraneoplastic antigen-like protein 8B (635 aa).

Disordered stretches follow at residues 115 to 202 (PTQA…DESL), 260 to 332 (TDKS…NPEF), and 492 to 635 (AARE…PKCR). Positions 133–147 (SETQAQDSGEVTGQA) are enriched in polar residues. The span at 156–183 (NPRRGRRGRRNRTRRNRLTQKGKKRSRG) shows a compositional bias: basic residues. The segment covering 261–273 (DKSKKEEAEKEPA) has biased composition (basic and acidic residues). 2 stretches are compositionally biased toward acidic residues: residues 302-329 (PDEE…ELDN) and 502-524 (GSEE…EASE). Residues 531–540 (RKPRAKRART) show a composition bias toward basic residues. Residues 541-557 (APRGLTPAGAPPTASGA) show a composition bias toward low complexity. Composition is skewed to basic residues over residues 558 to 568 (RKTRAGGRGRG) and 619 to 635 (ARGK…PKCR).

It belongs to the PNMA family.

The protein is Paraneoplastic antigen-like protein 8B of Homo sapiens (Human).